A 138-amino-acid chain; its full sequence is Putative nickel-responsive regulator (138 aa).

The Ni(2+) site is built by His-78, His-89, His-91, and Cys-97.

This sequence belongs to the transcriptional regulatory CopG/NikR family. Ni(2+) serves as cofactor.

Its function is as follows. Transcriptional regulator. The polypeptide is Putative nickel-responsive regulator (Pyrococcus furiosus (strain ATCC 43587 / DSM 3638 / JCM 8422 / Vc1)).